The sequence spans 471 residues: Tumor necrosis factor receptor superfamily member 1A (471 aa).

A signal peptide spans 1–29 (MGLPTVPGLLLPLVLPALLADVYPAGVQG). The Extracellular segment spans residues 30–210 (LVPHPGDLEK…GKDSQDPGTT (181 aa)). TNFR-Cys repeat units follow at residues 43-82 (PCPQGKYNHPQNSTICCTKCHKGTYLYNDCPGPGRDTDCR), 83-125 (VCAP…DTVC), 126-166 (GCRK…DTIC), and 167-195 (HCHMGFFLKGAKCISCHDCKNKECEKLCP). Cystine bridges form between C44/C58, C59/C72, C62/C81, C84/C99, C102/C117, C105/C125, and C127/C143. N54 carries N-linked (GlcNAc...) asparagine glycosylation. N-linked (GlcNAc...) asparagine glycosylation is found at N145 and N151. 5 cysteine pairs are disulfide-bonded: C146/C158, C149/C166, C168/C179, C182/C194, and C185/C190. A helical membrane pass occupies residues 211-233 (VLLPLVIVFGLCLASFASVVLAC). Topologically, residues 234 to 471 (RYQRWKPKLY…RLASEPRLLW (238 aa)) are cytoplasmic. Residues 340-360 (TPGPPASTHLCTPVQKWEASA) are N-SMase activation domain (NSD). A Death domain is found at 372-457 (PATLYAVVDG…GCLENIEEAL (86 aa)).

Binding of TNF to the extracellular domain leads to homotrimerization. The aggregated death domains provide a novel molecular interface that interacts specifically with the death domain of TRADD. Various TRADD-interacting proteins such as TRAFS, RIPK1 and possibly FADD, are recruited to the complex by their association with TRADD. This complex activates at least two distinct signaling cascades, apoptosis and NF-kappa-B signaling. Interacts with BAG4, BABAM2, FEM1B, GRB2, SQSTM1 and TRPC4AP. Interacts directly with NOL3 (via CARD domain); inhibits TNF-signaling pathway. Interacts with SH3RF2, TRADD and RIPK1. SH3RF2 facilitates the recruitment of RIPK1 and TRADD to TNFRSF1A in a TNF-alpha-dependent process. Interacts with PGLYRP1; this interaction is important for cell death induction. Interacts (via death domain) with MADD (via death domain).

The protein localises to the cell membrane. The protein resides in the golgi apparatus membrane. Receptor for TNFSF2/TNF-alpha and homotrimeric TNFSF1/lymphotoxin-alpha. The adapter molecule FADD recruits caspase-8 to the activated receptor. The resulting death-inducing signaling complex (DISC) performs caspase-8 proteolytic activation which initiates the subsequent cascade of caspases (aspartate-specific cysteine proteases) mediating apoptosis. In Bos taurus (Bovine), this protein is Tumor necrosis factor receptor superfamily member 1A (TNFRSF1A).